A 234-amino-acid polypeptide reads, in one-letter code: NLP effector protein 1 (234 aa).

Positions 1–18 (MQLRAFISVFASLACVNA) are cleaved as a signal peptide. The N-linked (GlcNAc...) asparagine glycan is linked to Asn66. The short motif at 102–112 (AFMYSWYMPKD) is the Conserved undecapeptide motif I element. The Hepta-peptide GHRHDWE motif II signature appears at 119 to 125 (GHRHDWE).

It belongs to the Necrosis inducing protein (NPP1) family.

Its subcellular location is the secreted. Secreted effector that contributes to virulence during infection by P.capsici. Induces distinct chlorosis at 3 days after inoculation of host C.annuum leaves, and all the chlorotic areas gradually turn brown and become moderately necrotic at 7 days after inoculation. Leads only to chlorotic areas, without necrosis at 7 days after non-host N.benthamiana leaves infection. Induces cell death in hot pepper. The polypeptide is NLP effector protein 1 (Phytophthora capsici).